Consider the following 1009-residue polypeptide: Anillin-like protein 2 (1009 aa).

3 disordered regions span residues 1 to 29 (MYRR…DSNR), 272 to 295 (FGQE…QTIV), and 539 to 558 (GTGY…PTLV). Residues 542–557 (YSASSSGPQFTRSPTL) are compositionally biased toward polar residues. Residues 626 to 657 (SAADKINDSKRQISKLIETIEKTRKHIQLAEI) adopt a coiled-coil conformation. Residues 892 to 1005 (DVEYRGFLYL…WLNAINDTLF (114 aa)) enclose the PH domain.

As to expression, localizes to the surface of the rachis.

Functionally, required to maintain the structure of the rachis, the central cytoplasmic core of the syncytial adult gonad. Failure to maintain the rachis leads to premature dissociation of oocytes and thereby impedes oogenesis. This is Anillin-like protein 2 (ani-2) from Caenorhabditis elegans.